The chain runs to 109 residues: uncharacterized protein (109 aa).

The tract at residues 67 to 96 is disordered; that stretch reads YFGNKLWRPTPRSGQSGQSRPKTGPHGSQR. The span at 78 to 87 shows a compositional bias: polar residues; that stretch reads RSGQSGQSRP.

This is an uncharacterized protein from Saccharomyces cerevisiae (strain ATCC 204508 / S288c) (Baker's yeast).